Here is a 158-residue protein sequence, read N- to C-terminus: NAD(P)H-quinone oxidoreductase subunit J, chloroplastic (158 aa).

It belongs to the complex I 30 kDa subunit family. In terms of assembly, NDH is composed of at least 16 different subunits, 5 of which are encoded in the nucleus.

It localises to the plastid. It is found in the chloroplast thylakoid membrane. The catalysed reaction is a plastoquinone + NADH + (n+1) H(+)(in) = a plastoquinol + NAD(+) + n H(+)(out). It catalyses the reaction a plastoquinone + NADPH + (n+1) H(+)(in) = a plastoquinol + NADP(+) + n H(+)(out). In terms of biological role, NDH shuttles electrons from NAD(P)H:plastoquinone, via FMN and iron-sulfur (Fe-S) centers, to quinones in the photosynthetic chain and possibly in a chloroplast respiratory chain. The immediate electron acceptor for the enzyme in this species is believed to be plastoquinone. Couples the redox reaction to proton translocation, and thus conserves the redox energy in a proton gradient. This Vitis vinifera (Grape) protein is NAD(P)H-quinone oxidoreductase subunit J, chloroplastic.